A 374-amino-acid chain; its full sequence is Flap endonuclease 1 (374 aa).

Positions 1 to 105 (MGVKGLNKLI…GELEKRLLRR (105 aa)) are N-domain. A Mg(2+)-binding site is contributed by aspartate 34. Positions 47 and 71 each coordinate DNA. Mg(2+) contacts are provided by aspartate 87, glutamate 159, glutamate 161, aspartate 180, and aspartate 182. The tract at residues 123–254 (DHLKFEKRLV…VTAYKLIKEH (132 aa)) is I-domain. Position 159 (glutamate 159) interacts with DNA. 2 residues coordinate DNA: glycine 232 and aspartate 234. Aspartate 234 contacts Mg(2+). The interval 339-347 (VQGRLDSFF) is interaction with PCNA. The segment at 353-374 (DDGKDKKRKSTAKDTKSKKQKK) is disordered.

The protein belongs to the XPG/RAD2 endonuclease family. FEN1 subfamily. As to quaternary structure, interacts with PCNA. Three molecules of RAD27 bind to one PCNA trimer with each molecule binding to one PCNA monomer. PCNA stimulates the nuclease activity without altering cleavage specificity. Mg(2+) is required as a cofactor. Post-translationally, phosphorylated. Phosphorylation upon DNA damage induces relocalization to the nuclear plasma.

It is found in the nucleus. Its subcellular location is the nucleolus. The protein resides in the nucleoplasm. It localises to the mitochondrion. Functionally, structure-specific nuclease with 5'-flap endonuclease and 5'-3' exonuclease activities involved in DNA replication and repair. During DNA replication, cleaves the 5'-overhanging flap structure that is generated by displacement synthesis when DNA polymerase encounters the 5'-end of a downstream Okazaki fragment. It enters the flap from the 5'-end and then tracks to cleave the flap base, leaving a nick for ligation. Also involved in the long patch base excision repair (LP-BER) pathway, by cleaving within the apurinic/apyrimidinic (AP) site-terminated flap. Acts as a genome stabilization factor that prevents flaps from equilibrating into structures that lead to duplications and deletions. Also possesses 5'-3' exonuclease activity on nicked or gapped double-stranded DNA, and exhibits RNase H activity. Also involved in replication and repair of rDNA and in repairing mitochondrial DNA. In Candida tropicalis (strain ATCC MYA-3404 / T1) (Yeast), this protein is Flap endonuclease 1.